The chain runs to 495 residues: IQ domain-containing protein IQM5 (495 aa).

The interval 89 to 122 (ENRGGEEEDERGSSPKRRNRGNLTALSLPAPTPF) is disordered. Residues 131–160 (LDAAAVTLQKVYKSYRTRRNLADCAVVVEE) enclose the IQ domain.

In terms of tissue distribution, expressed in roots, rosette and cauline leaves, and at lower levels in stems, flowers and siliques.

It is found in the cytoplasm. The protein localises to the nucleus. Functionally, may be involved in biotic and abiotic stress responses. The polypeptide is IQ domain-containing protein IQM5 (Arabidopsis thaliana (Mouse-ear cress)).